The chain runs to 234 residues: Sugar fermentation stimulation protein A (234 aa).

A DNA-binding region (H-T-H motif) is located at residues 201 to 220 (LLSEAQQRGVEILAYKAELS).

This sequence belongs to the SfsA family.

In terms of biological role, binds to DNA non-specifically. Could be a regulatory factor involved in maltose metabolism. The sequence is that of Sugar fermentation stimulation protein A from Escherichia coli O127:H6 (strain E2348/69 / EPEC).